Consider the following 442-residue polypeptide: Glutamate-1-semialdehyde 2,1-aminomutase (442 aa).

Position 282 is an N6-(pyridoxal phosphate)lysine (Lys282).

The protein belongs to the class-III pyridoxal-phosphate-dependent aminotransferase family. HemL subfamily. As to quaternary structure, homodimer. Pyridoxal 5'-phosphate serves as cofactor.

It is found in the cytoplasm. It catalyses the reaction (S)-4-amino-5-oxopentanoate = 5-aminolevulinate. The protein operates within porphyrin-containing compound metabolism; protoporphyrin-IX biosynthesis; 5-aminolevulinate from L-glutamyl-tRNA(Glu): step 2/2. In Polaromonas naphthalenivorans (strain CJ2), this protein is Glutamate-1-semialdehyde 2,1-aminomutase.